A 397-amino-acid polypeptide reads, in one-letter code: Transcription factor TGAL6 (397 aa).

The bZIP domain maps to 104–148; that stretch reads PDKVLRRLAQNREAARKSRLRKKAYIQQLETSRLKLAQLEQELQR. The basic motif stretch occupies residues 106–126; that stretch reads KVLRRLAQNREAARKSRLRKK. Residues 132 to 146 form a leucine-zipper region; sequence LETSRLKLAQLEQEL. In terms of domain architecture, DOG1 spans 175-390; sequence ALGFEIKYSH…RALSSLWAAR (216 aa).

This sequence belongs to the bZIP family.

It is found in the nucleus. In terms of biological role, transcriptional regulator involved in defense response. This Oryza sativa subsp. japonica (Rice) protein is Transcription factor TGAL6.